The following is a 617-amino-acid chain: uncharacterized protein (617 aa).

Positions 387–396 (NGGMSATQLP) are enriched in polar residues. 2 disordered regions span residues 387 to 419 (NGGM…HAAP) and 443 to 599 (YDDF…NNEQ). Residues 404–414 (RQAAANQFQQR) are compositionally biased toward low complexity. Polar residues predominate over residues 453–474 (QPLTQQQKDAARQRYQSASPEQ). 2 stretches are compositionally biased toward basic and acidic residues: residues 490–499 (QRREAARERI) and 522–531 (QRRDAARERI). Residues 549 to 570 (RPLNQQQRDNARQRVQSASPEQ) are compositionally biased toward polar residues. Over residues 572–585 (QVFREKVQESRPQR) the composition is skewed to basic and acidic residues. Residues 586–599 (LNDSNHTVRLNNEQ) are compositionally biased toward polar residues.

This is an uncharacterized protein from Escherichia coli (strain K12).